A 159-amino-acid polypeptide reads, in one-letter code: MNKQISKKPAQRTIALNKKALHDYYVEQRFEAGLVLEGWEVKSIRAGRVQLRDSYVVFKGGEAWLIGAHLSPLPNVAEYMKADPQRSRKLLLNKPEIGKLFGAVQKQGLTVVPLDLHWHKNHVKVEIALAKGKKTHDKRETIKRREWEREKHRVLKSHG.

This sequence belongs to the SmpB family.

The protein localises to the cytoplasm. In terms of biological role, required for rescue of stalled ribosomes mediated by trans-translation. Binds to transfer-messenger RNA (tmRNA), required for stable association of tmRNA with ribosomes. tmRNA and SmpB together mimic tRNA shape, replacing the anticodon stem-loop with SmpB. tmRNA is encoded by the ssrA gene; the 2 termini fold to resemble tRNA(Ala) and it encodes a 'tag peptide', a short internal open reading frame. During trans-translation Ala-aminoacylated tmRNA acts like a tRNA, entering the A-site of stalled ribosomes, displacing the stalled mRNA. The ribosome then switches to translate the ORF on the tmRNA; the nascent peptide is terminated with the 'tag peptide' encoded by the tmRNA and targeted for degradation. The ribosome is freed to recommence translation, which seems to be the essential function of trans-translation. In Coxiella burnetii (strain RSA 331 / Henzerling II), this protein is SsrA-binding protein.